The following is a 177-amino-acid chain: Tumor necrosis factor ligand superfamily member 18 (177 aa).

Over Met-1 to Trp-27 the chain is Cytoplasmic. A helical; Signal-anchor for type II membrane protein transmembrane segment spans residues Leu-28–Phe-48. Residues Ile-47–Leu-170 enclose the THD domain. Topologically, residues Leu-49–Ser-177 are extracellular. A disulfide bridge connects residues Cys-58 and Cys-78. Residues Asn-129 and Asn-161 are each glycosylated (N-linked (GlcNAc...) asparagine).

This sequence belongs to the tumor necrosis factor family. Homodimer. Homotrimer. As to expression, expressed at high levels in the small intestine, ovary, testis, kidney and endothelial cells.

It localises to the cell membrane. Cytokine that binds to TNFRSF18/AITR/GITR. Regulates T-cell responses. Can function as costimulator and lower the threshold for T-cell activation and T-cell proliferation. Important for interactions between activated T-lymphocytes and endothelial cells. Mediates activation of NF-kappa-B. Triggers increased phosphorylation of STAT1 and up-regulates expression of VCAM1 and ICAM1. Promotes leukocyte adhesion to endothelial cells. Regulates migration of monocytes from the splenic reservoir to sites of inflammation. In Homo sapiens (Human), this protein is Tumor necrosis factor ligand superfamily member 18.